Here is a 472-residue protein sequence, read N- to C-terminus: Eukaryotic translation initiation factor 2 subunit 3, X-linked (472 aa).

A2 is subject to N-acetylalanine. S16 is subject to Phosphoserine. The tr-type G domain maps to 39–248 (QATINIGTIG…IVKKIPVPPR (210 aa)). Residues 48 to 55 (GHVAHGKS) form a G1 region. 51-56 (AHGKST) lines the GTP pocket. A G2 region spans residues 76 to 80 (NITIK). Residues 134–137 (DCPG) form a G3 region. GTP contacts are provided by residues 190–193 (NKID) and 225–227 (SAQ). Residues 190-193 (NKID) form a G4 region. The G5 stretch occupies residues 225–227 (SAQ). Residues 457-469 (GQIRRGVTIKPTV) are interacts with Cdc123.

This sequence belongs to the TRAFAC class translation factor GTPase superfamily. Classic translation factor GTPase family. EIF2G subfamily. Eukaryotic translation initiation factor 2 eIF2 is a heterotrimeric complex composed of an alpha (EIF2S1), a beta (EIF2S2) and a gamma (EIF2S3) chain. eIF2 is member of the 43S pre-initiation complex (43S PIC). Interacts (via C-terminus) with CDC123; the interaction is direct. In terms of tissue distribution, widely expressed.

It localises to the cytoplasm. The protein resides in the cytosol. It catalyses the reaction GTP + H2O = GDP + phosphate + H(+). Functionally, member of the eIF2 complex that functions in the early steps of protein synthesis by forming a ternary complex with GTP and initiator tRNA. This complex binds to a 40S ribosomal subunit, followed by mRNA binding to form the 43S pre-initiation complex (43S PIC). Junction of the 60S ribosomal subunit to form the 80S initiation complex is preceded by hydrolysis of the GTP bound to eIF2 and release of an eIF2-GDP binary complex. In order for eIF2 to recycle and catalyze another round of initiation, the GDP bound to eIF2 must exchange with GTP by way of a reaction catalyzed by eIF-2B. Along with its paralog on chromosome Y, may contribute to spermatogenesis up to the round spermatid stage. The chain is Eukaryotic translation initiation factor 2 subunit 3, X-linked (Eif2s3) from Rattus norvegicus (Rat).